The sequence spans 73 residues: Large ribosomal subunit protein bL31 (73 aa).

This sequence belongs to the bacterial ribosomal protein bL31 family. Type A subfamily. Part of the 50S ribosomal subunit.

Functionally, binds the 23S rRNA. This is Large ribosomal subunit protein bL31 from Cereibacter sphaeroides (strain ATCC 17029 / ATH 2.4.9) (Rhodobacter sphaeroides).